The following is a 66-amino-acid chain: Large ribosomal subunit protein bL35 (66 aa).

The span at Met-1 to Arg-16 shows a compositional bias: basic residues. Residues Met-1–Gly-20 form a disordered region.

This sequence belongs to the bacterial ribosomal protein bL35 family.

This Streptococcus thermophilus (strain CNRZ 1066) protein is Large ribosomal subunit protein bL35.